We begin with the raw amino-acid sequence, 210 residues long: MKVFKIPEATIMRLSIYSRYLRQLIEEGVETVSSGEIAAGVGVSSAQVRKDLAYFGEFGTRGVGYKVEDLYGCLLKILGLDRRWNIIIIGAGKLGSAFALYQGFLDRGFTISAIMDVDEKIIGSELDGVKIEPLELLQQRVTEKNITVGVITVPAPAAQDVTDLLVASGVKAILNFSPRVLKVPNDVILRNVDLSVNLELLSFYLALNNR.

A DNA-binding region (H-T-H motif) is located at residues 16-55 (IYSRYLRQLIEEGVETVSSGEIAAGVGVSSAQVRKDLAYF). 90-95 (GAGKLG) provides a ligand contact to NAD(+).

This sequence belongs to the transcriptional regulatory Rex family. In terms of assembly, homodimer.

It is found in the cytoplasm. Modulates transcription in response to changes in cellular NADH/NAD(+) redox state. The polypeptide is Redox-sensing transcriptional repressor Rex (Syntrophomonas wolfei subsp. wolfei (strain DSM 2245B / Goettingen)).